A 258-amino-acid polypeptide reads, in one-letter code: Ciliogenesis and planar polarity effector 2 (258 aa).

The small GTPase-like stretch occupies residues 51-258 (IDTASYKIFV…LPSSPESAPG (208 aa)). Serine 64, glycine 65, glycine 67, lysine 68, threonine 69, alanine 70, isoleucine 82, histidine 84, threonine 87, lysine 176, aspartate 178, and serine 206 together coordinate GTP.

This sequence belongs to the small GTPase superfamily. Rab family. In terms of assembly, interacts with FUZ. Associates with the CPLANE (ciliogenesis and planar polarity effectors) complex via its interaction with FUZ.

It is found in the cytoplasm. It localises to the cytoskeleton. Its subcellular location is the cilium basal body. The protein resides in the microtubule organizing center. The protein localises to the centrosome. It is found in the centriole. Required for efficient primary cilia initiation, regulating a late step in cilia initiation. Plays a role in the final maturation of the mother centriole and ciliary vesicle that allows extension of the ciliary axoneme. This chain is Ciliogenesis and planar polarity effector 2 (Cplane2), found in Mus musculus (Mouse).